The chain runs to 205 residues: MEQYGFYFDSERCTGCKTCELACKDYKDLGTEVNFRRIYEYTGGQWNQQADGCWHQNIFAYYMSISCNHCADPACTKVCPTGAMHKNADGFVIVNEEICIGCRYCHMACPYDAPQYDAQKGHMTKCDGCYSRVKSGQKPICVDACPLRALDFAPIDELRTKYGTQASIAPLPPTDITQPNLVVKPNKYARLSGDTSGFLGNPREV.

4Fe-4S ferredoxin-type domains lie at 4-32 (YGFY…LGTE), 57-89 (NIFA…KNAD), and 90-119 (GFVI…YDAQ). [4Fe-4S] cluster-binding residues include C13, C16, C19, C23, C67, C70, C75, C79, C99, C102, C105, C109, C126, C129, C141, and C145.

Heterotrimeric enzyme composed of a catalytic heterodimer (DmsAB) and a membrane anchor protein (DmsC). [4Fe-4S] cluster serves as cofactor.

Functionally, electron transfer subunit of the terminal reductase during anaerobic growth on various sulfoxide and N-oxide compounds. This Haemophilus influenzae (strain ATCC 51907 / DSM 11121 / KW20 / Rd) protein is Anaerobic dimethyl sulfoxide reductase chain B (dmsB).